A 555-amino-acid chain; its full sequence is Formate--tetrahydrofolate ligase (555 aa).

An ATP-binding site is contributed by 65-72 (TPAGEGKT).

This sequence belongs to the formate--tetrahydrofolate ligase family.

It carries out the reaction (6S)-5,6,7,8-tetrahydrofolate + formate + ATP = (6R)-10-formyltetrahydrofolate + ADP + phosphate. It functions in the pathway one-carbon metabolism; tetrahydrofolate interconversion. The protein is Formate--tetrahydrofolate ligase of Caldanaerobacter subterraneus subsp. tengcongensis (strain DSM 15242 / JCM 11007 / NBRC 100824 / MB4) (Thermoanaerobacter tengcongensis).